A 354-amino-acid chain; its full sequence is Putrescine/cadaverine-binding protein (354 aa).

Residues 1–20 (MMKKLLLVATLMAGAAQATA) form the signal peptide.

This sequence belongs to the bacterial solute-binding protein 1 family.

It is found in the periplasm. Binds putrescine and cadaverine. The polypeptide is Putrescine/cadaverine-binding protein (Pseudomonas aeruginosa (strain ATCC 15692 / DSM 22644 / CIP 104116 / JCM 14847 / LMG 12228 / 1C / PRS 101 / PAO1)).